We begin with the raw amino-acid sequence, 400 residues long: GTPase Obg (400 aa).

One can recognise an Obg domain in the interval 1 to 159; the sequence is MRFVDEAVIT…REIRLELKVL (159 aa). The OBG-type G domain occupies 160–333; it reads ADVGLLGMPN…VVYYLMDQIE (174 aa). Residues 166–173, 191–195, 213–216, 283–286, and 314–316 each bind GTP; these read GMPNAGKS, FTTMV, DIPG, NKLD, and SGL. The Mg(2+) site is built by Ser-173 and Thr-193.

The protein belongs to the TRAFAC class OBG-HflX-like GTPase superfamily. OBG GTPase family. In terms of assembly, monomer. Mg(2+) serves as cofactor.

Its subcellular location is the cytoplasm. Its function is as follows. An essential GTPase which binds GTP, GDP and possibly (p)ppGpp with moderate affinity, with high nucleotide exchange rates and a fairly low GTP hydrolysis rate. Plays a role in control of the cell cycle, stress response, ribosome biogenesis and in those bacteria that undergo differentiation, in morphogenesis control. This Acinetobacter baylyi (strain ATCC 33305 / BD413 / ADP1) protein is GTPase Obg.